Here is a 219-residue protein sequence, read N- to C-terminus: UPF0173 metal-dependent hydrolase Mhun_1705 (219 aa).

It belongs to the UPF0173 family.

This chain is UPF0173 metal-dependent hydrolase Mhun_1705, found in Methanospirillum hungatei JF-1 (strain ATCC 27890 / DSM 864 / NBRC 100397 / JF-1).